A 313-amino-acid chain; its full sequence is Probable cell division protein WhiA (313 aa).

The segment at residues 276 to 309 (SLKELGEMLHPKLGKSGVNHRLRKLDEIAERIRK) is a DNA-binding region (H-T-H motif).

It belongs to the WhiA family.

Its function is as follows. Involved in cell division and chromosome segregation. In Ruminiclostridium cellulolyticum (strain ATCC 35319 / DSM 5812 / JCM 6584 / H10) (Clostridium cellulolyticum), this protein is Probable cell division protein WhiA.